The following is a 391-amino-acid chain: ATP phosphoribosyltransferase regulatory subunit (391 aa).

The protein belongs to the class-II aminoacyl-tRNA synthetase family. HisZ subfamily. As to quaternary structure, heteromultimer composed of HisG and HisZ subunits.

It is found in the cytoplasm. It participates in amino-acid biosynthesis; L-histidine biosynthesis; L-histidine from 5-phospho-alpha-D-ribose 1-diphosphate: step 1/9. Its function is as follows. Required for the first step of histidine biosynthesis. May allow the feedback regulation of ATP phosphoribosyltransferase activity by histidine. The chain is ATP phosphoribosyltransferase regulatory subunit from Prochlorococcus marinus (strain SARG / CCMP1375 / SS120).